Reading from the N-terminus, the 519-residue chain is Putative cysteine ligase BshC (519 aa).

Coiled-coil stretches lie at residues 51–71 and 440–464; these read LNAL…SLKE and TKLN…HEQA.

Belongs to the BshC family.

Its function is as follows. Involved in bacillithiol (BSH) biosynthesis. May catalyze the last step of the pathway, the addition of cysteine to glucosamine malate (GlcN-Mal) to generate BSH. The sequence is that of Putative cysteine ligase BshC from Exiguobacterium sibiricum (strain DSM 17290 / CCUG 55495 / CIP 109462 / JCM 13490 / 255-15).